Here is a 208-residue protein sequence, read N- to C-terminus: Small ribosomal subunit protein uS4 (208 aa).

Residues 98-158 (RRLDNIVYRL…EKSRKVASIN (61 aa)) form the S4 RNA-binding domain.

It belongs to the universal ribosomal protein uS4 family. In terms of assembly, part of the 30S ribosomal subunit. Contacts protein S5. The interaction surface between S4 and S5 is involved in control of translational fidelity.

In terms of biological role, one of the primary rRNA binding proteins, it binds directly to 16S rRNA where it nucleates assembly of the body of the 30S subunit. With S5 and S12 plays an important role in translational accuracy. This chain is Small ribosomal subunit protein uS4, found in Geotalea daltonii (strain DSM 22248 / JCM 15807 / FRC-32) (Geobacter daltonii).